Here is a 40-residue protein sequence, read N- to C-terminus: Beta-defensin 1 (40 aa).

Cystine bridges form between Cys7–Cys35, Cys14–Cys29, and Cys19–Cys36. Position 40 is a glycine amide (Gly40).

In terms of assembly, monomer. Homodimer.

The protein resides in the secreted. It localises to the membrane. Its function is as follows. Has antimicrobial activity against the Gram-positive bacteria methicillin-resistant S.aureus ATCC 33591 and L.monocytogenes EGD, the Gram-negative bacterium E.coli ML53p and the yeast C.albicans 820. Has no hemolytic activity towards human erythrocytes. The chain is Beta-defensin 1 from Emys orbicularis (European pond turtle).